Reading from the N-terminus, the 130-residue chain is Small ribosomal subunit protein uS9 (130 aa).

The interval 109–130 (RAKERKKYGLYGARRSPQFTKR) is disordered.

This sequence belongs to the universal ribosomal protein uS9 family.

The sequence is that of Small ribosomal subunit protein uS9 from Malacoplasma penetrans (strain HF-2) (Mycoplasma penetrans).